The sequence spans 340 residues: Protein phosphatase PTC7 homolog fig (340 aa).

Residues 58 to 314 form the PPM-type phosphatase domain; sequence RAQAETIQAP…DDITVVLASV (257 aa). Residues aspartate 90, glycine 91, and aspartate 236 each coordinate Mn(2+).

It belongs to the PP2C family. Mg(2+) is required as a cofactor. Requires Mn(2+) as cofactor.

The enzyme catalyses O-phospho-L-seryl-[protein] + H2O = L-seryl-[protein] + phosphate. It catalyses the reaction O-phospho-L-threonyl-[protein] + H2O = L-threonyl-[protein] + phosphate. This Drosophila pseudoobscura pseudoobscura (Fruit fly) protein is Protein phosphatase PTC7 homolog fig.